Consider the following 216-residue polypeptide: Thiopurine S-methyltransferase (216 aa).

Residues W11, L46, E67, and R122 each contribute to the S-adenosyl-L-methionine site.

This sequence belongs to the class I-like SAM-binding methyltransferase superfamily. TPMT family.

It localises to the cytoplasm. It carries out the reaction S-adenosyl-L-methionine + a thiopurine = S-adenosyl-L-homocysteine + a thiopurine S-methylether.. This chain is Thiopurine S-methyltransferase, found in Vibrio campbellii (strain ATCC BAA-1116).